The following is a 110-amino-acid chain: Large ribosomal subunit protein uL22 (110 aa).

This sequence belongs to the universal ribosomal protein uL22 family. Part of the 50S ribosomal subunit.

This protein binds specifically to 23S rRNA; its binding is stimulated by other ribosomal proteins, e.g. L4, L17, and L20. It is important during the early stages of 50S assembly. It makes multiple contacts with different domains of the 23S rRNA in the assembled 50S subunit and ribosome. Functionally, the globular domain of the protein is located near the polypeptide exit tunnel on the outside of the subunit, while an extended beta-hairpin is found that lines the wall of the exit tunnel in the center of the 70S ribosome. The chain is Large ribosomal subunit protein uL22 from Citrobacter koseri (strain ATCC BAA-895 / CDC 4225-83 / SGSC4696).